Consider the following 617-residue polypeptide: ATP-dependent rRNA helicase SPB4 (617 aa).

The short motif at 10-38 (WKNLQYDLQPWIKEAIASLGFPTMTPVQA) is the Q motif element. In terms of domain architecture, Helicase ATP-binding spans 41 to 233 (IPLLSGNKDV…RAGMNNPVKV (193 aa)). 54 to 61 (AVTGSGKT) is a binding site for ATP. Positions 181 to 184 (DEAD) match the DEAD box motif. The Helicase C-terminal domain maps to 261 to 421 (KITTLIKLLH…EMPTPDLNQS (161 aa)). Residues 515-585 (ADNQQEASRL…EKQIMEESSD (71 aa)) adopt a coiled-coil conformation. Positions 547-617 (KNEAWSSKTE…GSMQGSFDDL (71 aa)) are disordered. Residues 555 to 566 (TETKETKQERRE) are compositionally biased toward basic and acidic residues. Over residues 608–617 (GSMQGSFDDL) the composition is skewed to polar residues.

This sequence belongs to the DEAD box helicase family. DDX55/SPB4 subfamily. As to quaternary structure, component of pre-60S ribosomal complexes.

The protein localises to the nucleus. It localises to the nucleolus. The catalysed reaction is ATP + H2O = ADP + phosphate + H(+). In terms of biological role, ATP-binding RNA helicase involved in the biogenesis of 60S ribosomal subunits. Binds 90S pre-ribosomal particles and dissociates from pre-60S ribosomal particles after processing of 27SB pre-rRNA. Required for the normal formation of 18S rRNA through the processing of pre-rRNAs at sites A0, A1 and A2, and the normal formation of 25S and 5.8S rRNAs through the processing of pre-rRNAs at sites C1 and C2. This Scheffersomyces stipitis (strain ATCC 58785 / CBS 6054 / NBRC 10063 / NRRL Y-11545) (Yeast) protein is ATP-dependent rRNA helicase SPB4.